The following is a 602-amino-acid chain: Elongation factor 4 (602 aa).

The tr-type G domain maps to 6–188 (RNVRNFSIIA…RITEVVPEPA (183 aa)). Residues 18-23 (DHGKST) and 135-138 (NKID) each bind GTP.

This sequence belongs to the TRAFAC class translation factor GTPase superfamily. Classic translation factor GTPase family. LepA subfamily.

It localises to the cell membrane. It carries out the reaction GTP + H2O = GDP + phosphate + H(+). Its function is as follows. Required for accurate and efficient protein synthesis under certain stress conditions. May act as a fidelity factor of the translation reaction, by catalyzing a one-codon backward translocation of tRNAs on improperly translocated ribosomes. Back-translocation proceeds from a post-translocation (POST) complex to a pre-translocation (PRE) complex, thus giving elongation factor G a second chance to translocate the tRNAs correctly. Binds to ribosomes in a GTP-dependent manner. This is Elongation factor 4 from Oceanobacillus iheyensis (strain DSM 14371 / CIP 107618 / JCM 11309 / KCTC 3954 / HTE831).